Consider the following 235-residue polypeptide: Peptidase E (235 aa).

Residues serine 122, aspartate 137, and histidine 159 each act as charge relay system in the active site.

This sequence belongs to the peptidase S51 family.

It is found in the cytoplasm. It catalyses the reaction Dipeptidase E catalyzes the hydrolysis of dipeptides Asp-|-Xaa. It does not act on peptides with N-terminal Glu, Asn or Gln, nor does it cleave isoaspartyl peptides.. Its function is as follows. Hydrolyzes dipeptides containing N-terminal aspartate residues. May play a role in allowing the cell to use peptide aspartate to spare carbon otherwise required for the synthesis of the aspartate family of amino acids. This chain is Peptidase E, found in Shewanella amazonensis (strain ATCC BAA-1098 / SB2B).